The following is a 188-amino-acid chain: MKLDVFAGQEISELSMIEVARAILEERGRDNDMYFSDLVNEIQNYLGKSDADIRYALPFFYTDLNTDGSFIPLGENKWGLRSWYAIDEIDEEIITLEDEEDGAPKRKKKRVNAFMDGDEDAIDYSADDPEDEDFVRESSDIEYDEEDPDDEKSEVESYDSELNEIIPEDDFEEVDLNEEDEEDEDEEE.

The HTH HARE-type domain maps to 14-83 (LSMIEVARAI…GENKWGLRSW (70 aa)). Positions 119 to 188 (EDAIDYSADD…EDEEDEDEEE (70 aa)) are disordered.

Belongs to the RpoE family. In terms of assembly, RNAP is composed of a core of 2 alpha, a beta and a beta' subunits. The core is associated with a delta subunit and one of several sigma factors.

Participates in both the initiation and recycling phases of transcription. In the presence of the delta subunit, RNAP displays an increased specificity of transcription, a decreased affinity for nucleic acids, and an increased efficiency of RNA synthesis because of enhanced recycling. The chain is Probable DNA-directed RNA polymerase subunit delta from Streptococcus equi subsp. zooepidemicus (strain H70).